The following is a 683-amino-acid chain: Heat shock protein homolog ECU03_0520 (683 aa).

It belongs to the heat shock protein 70 family.

The protein localises to the cytoplasm. This chain is Heat shock protein homolog ECU03_0520, found in Encephalitozoon cuniculi (strain GB-M1) (Microsporidian parasite).